Consider the following 378-residue polypeptide: Quinolinate synthase (378 aa).

Residues H59 and S80 each contribute to the iminosuccinate site. C125 is a [4Fe-4S] cluster binding site. Iminosuccinate contacts are provided by residues 151 to 153 (YAN) and S168. [4Fe-4S] cluster is bound at residue C212. Residues 238-240 (HPE) and T255 each bind iminosuccinate. Residue C309 participates in [4Fe-4S] cluster binding.

This sequence belongs to the quinolinate synthase family. Type 1 subfamily. [4Fe-4S] cluster serves as cofactor.

It localises to the cytoplasm. The catalysed reaction is iminosuccinate + dihydroxyacetone phosphate = quinolinate + phosphate + 2 H2O + H(+). It functions in the pathway cofactor biosynthesis; NAD(+) biosynthesis; quinolinate from iminoaspartate: step 1/1. Its function is as follows. Catalyzes the condensation of iminoaspartate with dihydroxyacetone phosphate to form quinolinate. This Burkholderia lata (strain ATCC 17760 / DSM 23089 / LMG 22485 / NCIMB 9086 / R18194 / 383) protein is Quinolinate synthase.